A 168-amino-acid polypeptide reads, in one-letter code: Protein-export protein SecB (168 aa).

The interval Met-1–Ser-20 is disordered.

Belongs to the SecB family. Homotetramer, a dimer of dimers. One homotetramer interacts with 1 SecA dimer.

It is found in the cytoplasm. One of the proteins required for the normal export of preproteins out of the cell cytoplasm. It is a molecular chaperone that binds to a subset of precursor proteins, maintaining them in a translocation-competent state. It also specifically binds to its receptor SecA. The chain is Protein-export protein SecB from Rhodospirillum centenum (strain ATCC 51521 / SW).